A 97-amino-acid chain; its full sequence is Serine protease inhibitor Kazal-type 13 (97 aa).

The N-terminal stretch at 1–26 (MKRSGCWHQRMLLSLVLLTWTHVTFS) is a signal peptide. Asn33 carries an N-linked (GlcNAc...) asparagine glycan. Residues 36–97 (RWPKPPCKMY…IQFVKYGKCE (62 aa)) enclose the Kazal-like domain. Disulfide bonds link Cys42/Cys78, Cys56/Cys75, and Cys64/Cys96.

The protein resides in the secreted. May be a serine protease inhibitor. Essential for sperm maturation and fertility. Inhibits sperm acrosome reaction, protecting sperm from premature reaction. The polypeptide is Serine protease inhibitor Kazal-type 13 (Spink13) (Mus musculus (Mouse)).